A 51-amino-acid polypeptide reads, in one-letter code: Lantibiotic streptococcin A-FF22 (51 aa).

Residues 1 to 25 constitute a propeptide that is removed on maturation; sequence MEKNNEVINSIQEVSLEELDQIIGA. Cross-links (beta-methyllanthionine (Thr-Cys)) lie at residues 33 to 38 and 42 to 50; these read TISHEC and TWAFLATCC. Residues 35 to 49 constitute a cross-link (lanthionine (Ser-Cys)); the sequence is SHECHLNTWAFLATC. A 2,3-didehydrobutyrine modification is found at threonine 48.

It belongs to the type A lantibiotic family. Post-translationally, maturation of lantibiotics involves the enzymatic conversion of Thr, and Ser into dehydrated AA and the formation of thioether bonds with cysteine. This is followed by membrane translocation and cleavage of the modified precursor.

It localises to the secreted. Its subcellular location is the cell surface. In terms of biological role, lanthionine-containing peptide antibiotic (lantibiotic) active on certain Gram-positive bacteria. The bactericidal activity of lantibiotics is based on depolarization of energized bacterial cytoplasmic membranes, initiated by the formation of aqueous transmembrane pores. This Streptococcus pyogenes protein is Lantibiotic streptococcin A-FF22 (scnA).